The chain runs to 262 residues: Cytochrome c oxidase subunit 3 (262 aa).

Helical transmembrane passes span 39 to 59, 83 to 103, 120 to 140, 163 to 183, 201 to 221, and 240 to 260; these read YDIS…YQWW, GMIL…WAFF, MGII…ILLA, GLFF…YEYI, ATGF…VCLL, and AWYW…IYWW.

This sequence belongs to the cytochrome c oxidase subunit 3 family. As to quaternary structure, component of the cytochrome c oxidase (complex IV, CIV), a multisubunit enzyme composed of a catalytic core of 3 subunits and several supernumerary subunits. The complex exists as a monomer or a dimer and forms supercomplexes (SCs) in the inner mitochondrial membrane with ubiquinol-cytochrome c oxidoreductase (cytochrome b-c1 complex, complex III, CIII).

It is found in the mitochondrion inner membrane. It carries out the reaction 4 Fe(II)-[cytochrome c] + O2 + 8 H(+)(in) = 4 Fe(III)-[cytochrome c] + 2 H2O + 4 H(+)(out). Component of the cytochrome c oxidase, the last enzyme in the mitochondrial electron transport chain which drives oxidative phosphorylation. The respiratory chain contains 3 multisubunit complexes succinate dehydrogenase (complex II, CII), ubiquinol-cytochrome c oxidoreductase (cytochrome b-c1 complex, complex III, CIII) and cytochrome c oxidase (complex IV, CIV), that cooperate to transfer electrons derived from NADH and succinate to molecular oxygen, creating an electrochemical gradient over the inner membrane that drives transmembrane transport and the ATP synthase. Cytochrome c oxidase is the component of the respiratory chain that catalyzes the reduction of oxygen to water. Electrons originating from reduced cytochrome c in the intermembrane space (IMS) are transferred via the dinuclear copper A center (CU(A)) of subunit 2 and heme A of subunit 1 to the active site in subunit 1, a binuclear center (BNC) formed by heme A3 and copper B (CU(B)). The BNC reduces molecular oxygen to 2 water molecules using 4 electrons from cytochrome c in the IMS and 4 protons from the mitochondrial matrix. The sequence is that of Cytochrome c oxidase subunit 3 (mt:CoIII) from Drosophila yakuba (Fruit fly).